The chain runs to 340 residues: Putative inactive cytochrome P450 family member 4Z2 (340 aa).

Residues Met1–Leu9 are Cytoplasmic-facing. The helical; Signal-anchor for type II membrane protein transmembrane segment at Met10–Ile30 threads the bilayer. Residues Arg31–Cys340 are Lumenal-facing.

Belongs to the cytochrome P450 family. The cofactor is heme. Detected at low levels in mammary gland and mammary carcinoma.

The protein localises to the membrane. The polypeptide is Putative inactive cytochrome P450 family member 4Z2 (CYP4Z2P) (Homo sapiens (Human)).